The primary structure comprises 244 residues: tRNA (guanine-N(1)-)-methyltransferase (244 aa).

S-adenosyl-L-methionine is bound by residues glycine 111 and isoleucine 130–leucine 135.

This sequence belongs to the RNA methyltransferase TrmD family. In terms of assembly, homodimer.

The protein localises to the cytoplasm. The enzyme catalyses guanosine(37) in tRNA + S-adenosyl-L-methionine = N(1)-methylguanosine(37) in tRNA + S-adenosyl-L-homocysteine + H(+). In terms of biological role, specifically methylates guanosine-37 in various tRNAs. The polypeptide is tRNA (guanine-N(1)-)-methyltransferase (Phytoplasma australiense).